A 506-amino-acid polypeptide reads, in one-letter code: BTB/POZ domain-containing protein At3g22104 (506 aa).

Positions 6–76 (SDLEVDINGE…CYNDGRVAVM (71 aa)) constitute a BTB domain. Residues 187–435 (TWWFDEVLVL…LDEQQQQQQQ (249 aa)) form the NPH3 domain. Positions 421–492 (QAIETLDEQQ…MEVIKKRSKS (72 aa)) form a coiled coil. The interval 485–506 (VIKKRSKSSSKGSNRSLPKLCS) is disordered.

This sequence belongs to the NPH3 family.

Its pathway is protein modification; protein ubiquitination. Its function is as follows. May act as a substrate-specific adapter of an E3 ubiquitin-protein ligase complex (CUL3-RBX1-BTB) which mediates the ubiquitination and subsequent proteasomal degradation of target proteins. The polypeptide is BTB/POZ domain-containing protein At3g22104 (Arabidopsis thaliana (Mouse-ear cress)).